Consider the following 320-residue polypeptide: Cytochrome c biogenesis protein CcsA (320 aa).

8 helical membrane passes run 9–29, 44–64, 71–91, 99–119, 144–164, 226–246, 261–281, and 287–307; these read ILIH…FLTL, GMIV…IYSG, LYES…VCYF, LNAI…SGLL, MVLG…LLVI, IISL…VWAN, WAFI…NINL, and AIVA…VNLL.

This sequence belongs to the CcmF/CycK/Ccl1/NrfE/CcsA family. In terms of assembly, may interact with Ccs1.

The protein resides in the plastid. The protein localises to the chloroplast thylakoid membrane. Required during biogenesis of c-type cytochromes (cytochrome c6 and cytochrome f) at the step of heme attachment. The chain is Cytochrome c biogenesis protein CcsA from Carica papaya (Papaya).